The following is a 94-amino-acid chain: Preprofallaxidin-9 (94 aa).

A signal peptide spans 1 to 22 (MASLKKSLFLVLFLGLVSLSIC). Positions 23–46 (EEEKRENEEDAEDENHEEESEEKR) are excised as a propeptide. Residues 27-46 (RENEEDAEDENHEEESEEKR) are disordered. The segment covering 30 to 42 (EEDAEDENHEEES) has biased composition (acidic residues). Position 62 is a leucine amide (Leu62). Residues 66–70 (SEEKR) constitute a propeptide that is removed on maturation. At Met75 the chain carries Methionine amide. Residues 79–83 (SEEKR) constitute a propeptide that is removed on maturation. Met88 carries the methionine amide modification. Positions 92-94 (SEE) are excised as a propeptide.

The protein belongs to the frog skin active peptide (FSAP) family. Brevinin subfamily. As to expression, expressed by the skin glands.

The protein resides in the secreted. Functionally, fallaxidin-1.3 shows no antibacterial activity against Gram-positive or Gram-negative bacteria. Does not inhibit the formation of NO by neuronal nitric oxide synthase. Has no effect on splenocyte proliferation or smooth muscle contraction. Its function is as follows. Fallaxidin-3.2 shows antibacterial activity against the Gram-positive bacteria E.faecalis (MIC=100 uM) and L.lactis (MIC=500 uM). No antibacterial activity against the Gram-positive bacteria B.cereus, L.innocua, M.luteus, S.epidermidis, S.uberis and S.aureus, or the Gram-negative bacteria E.cloacae and E.coli. In Litoria fallax (Eastern dwarf tree frog), this protein is Preprofallaxidin-9.